A 230-amino-acid chain; its full sequence is PKHD-type hydroxylase PD_1553 (230 aa).

In terms of domain architecture, Fe2OG dioxygenase spans 78 to 182 (RTLPPRFNRY…RIASFFWVQS (105 aa)). 3 residues coordinate Fe cation: His-96, Asp-98, and His-163. Arg-173 lines the 2-oxoglutarate pocket.

Fe(2+) is required as a cofactor. L-ascorbate serves as cofactor.

The protein is PKHD-type hydroxylase PD_1553 of Xylella fastidiosa (strain Temecula1 / ATCC 700964).